The sequence spans 648 residues: p-hydroxybenzoic acid efflux pump subunit AaeB (648 aa).

11 helical membrane passes run 11–31 (FACK…YFGL), 41–61 (AALV…SGAI), 65–87 (GWLR…MLLI), 91–110 (LLMI…LSSL), 125–145 (TALI…QLAL), 150–170 (EIVL…PRSV), 369–389 (LFWL…IAVV), 406–426 (FLMG…LILP), 430–450 (QSLV…GMAV), 458–478 (MGTL…GFPI), and 481–501 (FVDS…VLLV).

It belongs to the aromatic acid exporter ArAE (TC 2.A.85) family.

The protein localises to the cell inner membrane. Functionally, forms an efflux pump with AaeA. Could function as a metabolic relief valve, allowing to eliminate certain compounds when they accumulate to high levels in the cell. This is p-hydroxybenzoic acid efflux pump subunit AaeB from Edwardsiella ictaluri (strain 93-146).